The sequence spans 721 residues: Solute carrier family 12 member 8 (721 aa).

11 helical membrane-spanning segments follow: residues 53–73, 84–104, 115–135, 136–156, 174–194, 196–216, 247–267, 283–303, 321–341, 374–394, and 397–417; these read FGTWDGVFTSCMINIFGVVLF, GVLLGIVLVSFVILVALVTVL, IGSGGVYSMVSTVLGGKVGGT, IGVLYIFGQCVAGAMYITGFA, ISLAVLVGLLGINLAGVKWII, LQLLLFLLLAVSTLDFVIGSF, FFTVFGVFFPAATGVMVGFNM, LAAIGTSWFLYVVFVFLLGAI, LVGGLFLLGLYISSLASCMGG, PVAAIFITGLLTMAFVFIGQV, and LAPIVTINFMLTYSAVDYSYF. 2 disordered regions span residues 473–505 and 533–580; these read PNHTEAPESTSSQEKDPKMFKFSKPRKPAKQTL and NESQ…STVA. Acidic residues predominate over residues 553 to 565; sequence TESDEPDSEEDVD. The next 2 helical transmembrane spans lie at 606–626 and 628–648; these read FLGAILSIVIMFVIQWIYALV and LGVAIILYLYIGRVNPGLNPG.

This sequence belongs to the SLC12A transporter family.

Its subcellular location is the membrane. Functionally, cation/chloride cotransporter. This is Solute carrier family 12 member 8 (slc12a8) from Xenopus laevis (African clawed frog).